A 388-amino-acid chain; its full sequence is Ectopic P granules protein 6 (388 aa).

Positions 1-25 are enriched in basic and acidic residues; sequence MSKKEETIFFRIEKENRPESSKKEE. The disordered stretch occupies residues 1 to 33; it reads MSKKEETIFFRIEKENRPESSKKEEDENSTEEM. The stretch at 217–257 is one WD 1 repeat; it reads AHLTDIAQVALNCQGTLVATGSTKGTVIRVFDARTKGPLYE. Residues 258 to 261 carry the LRRG motif motif; it reads LRRG. Residues 262-301 form a WD 2 repeat; sequence TVQAHLQCMAFSPCSSYLAVASDKGTLHMFGIRDAEPQKK. The interval 265–328 is required for atg-2 binding; the sequence is AHLQCMAFSP…LDRPVMAIGF (64 aa).

This sequence belongs to the WD repeat PROPPIN family. In terms of assembly, interacts with atg-2; the interaction is direct. In terms of tissue distribution, widely expressed in tissues including pharyngeal, muscle and neuronal tissues.

The protein localises to the cytoplasm. It localises to the preautophagosomal structure membrane. Component of the epg-6/atg-2 complex, which is involved in the generation of autophagosomes from omegasomes and in the distribution of atg-9 and atg-13 during the autophagy-mediated degradation of protein aggregates. Binds to phosphatidylinositols on preautophagosomes, which are early autophagic structures, to promote autophagosome formation. In particular, binds with high affinity to phosphatidylinositols including phosphatidylinositol 3-phosphate (PtdIns(3)P) and phosphatidylinositol 5-phosphate (PtdIns(5)P), but more weakly to phosphatidylinositol 4-phosphate (PtdIns(4)P) and phosphatidylinositol 3,5-bisphosphate (PtdIns(3,5)P2). Involved in autophagy-mediated degradation of ribosomal RNA and ribosomal proteins in lysosomes, which is essential for maintaining nucleotide homeostasis. The chain is Ectopic P granules protein 6 from Caenorhabditis elegans.